Consider the following 131-residue polypeptide: Small ribosomal subunit protein uS8 (131 aa).

This sequence belongs to the universal ribosomal protein uS8 family. Part of the 30S ribosomal subunit. Contacts proteins S5 and S12.

Its function is as follows. One of the primary rRNA binding proteins, it binds directly to 16S rRNA central domain where it helps coordinate assembly of the platform of the 30S subunit. In Leptothrix cholodnii (strain ATCC 51168 / LMG 8142 / SP-6) (Leptothrix discophora (strain SP-6)), this protein is Small ribosomal subunit protein uS8.